The primary structure comprises 156 residues: Small ribosomal subunit protein uS7 (156 aa).

The protein belongs to the universal ribosomal protein uS7 family. As to quaternary structure, part of the 30S ribosomal subunit. Contacts proteins S9 and S11.

In terms of biological role, one of the primary rRNA binding proteins, it binds directly to 16S rRNA where it nucleates assembly of the head domain of the 30S subunit. Is located at the subunit interface close to the decoding center, probably blocks exit of the E-site tRNA. This is Small ribosomal subunit protein uS7 from Cutibacterium acnes (strain DSM 16379 / KPA171202) (Propionibacterium acnes).